The chain runs to 337 residues: Serpentine receptor class beta-6 (337 aa).

Helical transmembrane passes span 20 to 40 (QFYTLLTSIFSVFPLLYLIIF), 62 to 82 (ILISVLNNCVVFAHHVVIPFL), 98 to 118 (IFQNIGVFGISCPMLTILGIT), 138 to 158 (IGVFIGVFAMLCDMALVYFFF), 183 to 203 (WLCYSLLAINSVNLVFNYFLV), 234 to 254 (TFISFIHVFFFSLYLIFTLII), and 273 to 293 (GVYITIPTYNLIIGIASCVIL).

This sequence belongs to the nematode receptor-like protein srb family. As to expression, expressed in the ADL, ADF and ASH chemosensory neurons in the head and in the PHA and PHB chemosensory neurons in the tail. Low expression also observed in the egg-laying structures in the mid-body region.

Its subcellular location is the cell membrane. Its function is as follows. Mediates recognition and avoidance of Streptomyces species by detecting dodecanoic acid secreted by the bacteria. Also mediates avoidance of decanoic acid which is not secreted by Streptomyces species but this may represent an additional important avoidance response in the environment. This Caenorhabditis elegans protein is Serpentine receptor class beta-6 (srb-6).